The chain runs to 538 residues: Bifunctional purine biosynthesis protein PurH (538 aa).

An MGS-like domain is found at 6–158 (KHIPAPDLHR…KNHAYVATVV (153 aa)).

It belongs to the PurH family.

It catalyses the reaction (6R)-10-formyltetrahydrofolate + 5-amino-1-(5-phospho-beta-D-ribosyl)imidazole-4-carboxamide = 5-formamido-1-(5-phospho-D-ribosyl)imidazole-4-carboxamide + (6S)-5,6,7,8-tetrahydrofolate. The enzyme catalyses IMP + H2O = 5-formamido-1-(5-phospho-D-ribosyl)imidazole-4-carboxamide. The protein operates within purine metabolism; IMP biosynthesis via de novo pathway; 5-formamido-1-(5-phospho-D-ribosyl)imidazole-4-carboxamide from 5-amino-1-(5-phospho-D-ribosyl)imidazole-4-carboxamide (10-formyl THF route): step 1/1. Its pathway is purine metabolism; IMP biosynthesis via de novo pathway; IMP from 5-formamido-1-(5-phospho-D-ribosyl)imidazole-4-carboxamide: step 1/1. This chain is Bifunctional purine biosynthesis protein PurH, found in Brucella ovis (strain ATCC 25840 / 63/290 / NCTC 10512).